Reading from the N-terminus, the 513-residue chain is MSAVTLTPGRAALAQWRAIRDGAPLRLDPACRPGIARAAETVAAIVARGEPVYGINTGFGKLATVRIAPDDLATLQRNIVLSHAAGVGAPVPAGIVRLMMALKLASLAQGASGVRPETVALLDAMLARGVTPVVPGQGSVGASGDLAPLAHMTAAMIGVGECLDAGGARLPAAAALARADLAPLDLGPKEGLALLNGTQFSTALALAGLFGAEDLLRAGLVTGALSVDAARGSDTPFDPRIHALRRHRGQIDAADALRRLLAGSAIRASHLVGDERVQDPYCLRCQPQVMGAALDLLRQAGATLETEANGVSDNPLVFPETGEALSGGNFHAEPVAFAADMIALALCEIGSLAERRISLLVDPALSSGLPAFLTGRPGLNSGFMIPQVTAAALVSENKQRAYPASVDSIPTSANQEDHVSMAAHGARRLLAMAENAAAVLGIELLAAAQGCDFLAPLRSSEALERVRARLRAAVPRLDEDRYLHPELEAATALVRDGAVVAAAGLDLPGVDGR.

A cross-link (5-imidazolinone (Ala-Gly)) is located at residues 142 to 144; it reads ASG. The residue at position 143 (Ser-143) is a 2,3-didehydroalanine (Ser).

This sequence belongs to the PAL/histidase family. In terms of processing, contains an active site 4-methylidene-imidazol-5-one (MIO), which is formed autocatalytically by cyclization and dehydration of residues Ala-Ser-Gly.

It localises to the cytoplasm. The enzyme catalyses L-histidine = trans-urocanate + NH4(+). The protein operates within amino-acid degradation; L-histidine degradation into L-glutamate; N-formimidoyl-L-glutamate from L-histidine: step 1/3. The protein is Histidine ammonia-lyase of Methylobacterium sp. (strain 4-46).